Here is a 564-residue protein sequence, read N- to C-terminus: Type 2 DNA topoisomerase 6 subunit B (564 aa).

Residues Asn46, Asp78, 99-100 (TK), 109-116 (GQQGIGIS), and Lys471 each bind ATP.

This sequence belongs to the TOP6B family. In terms of assembly, homodimer. Heterotetramer of two Top6A and two Top6B chains.

It carries out the reaction ATP-dependent breakage, passage and rejoining of double-stranded DNA.. Its function is as follows. Relaxes both positive and negative superturns and exhibits a strong decatenase activity. This is Type 2 DNA topoisomerase 6 subunit B from Pyrococcus horikoshii (strain ATCC 700860 / DSM 12428 / JCM 9974 / NBRC 100139 / OT-3).